Here is a 429-residue protein sequence, read N- to C-terminus: UDP-N-acetylglucosamine 1-carboxyvinyltransferase (429 aa).

Position 22-23 (22-23 (KN)) interacts with phosphoenolpyruvate. R102 is a UDP-N-acetyl-alpha-D-glucosamine binding site. C126 acts as the Proton donor in catalysis. C126 carries the post-translational modification 2-(S-cysteinyl)pyruvic acid O-phosphothioketal. UDP-N-acetyl-alpha-D-glucosamine-binding positions include 131–135 (RPVDL), D316, and I338.

Belongs to the EPSP synthase family. MurA subfamily.

The protein localises to the cytoplasm. It carries out the reaction phosphoenolpyruvate + UDP-N-acetyl-alpha-D-glucosamine = UDP-N-acetyl-3-O-(1-carboxyvinyl)-alpha-D-glucosamine + phosphate. The protein operates within cell wall biogenesis; peptidoglycan biosynthesis. Cell wall formation. Adds enolpyruvyl to UDP-N-acetylglucosamine. This chain is UDP-N-acetylglucosamine 1-carboxyvinyltransferase, found in Methylocella silvestris (strain DSM 15510 / CIP 108128 / LMG 27833 / NCIMB 13906 / BL2).